Reading from the N-terminus, the 604-residue chain is Elongation factor 4 (604 aa).

Positions 7-189 constitute a tr-type G domain; the sequence is SRIRNFSIIA…SIVHLVPPPD (183 aa). Residues 19–24 and 136–139 each bind GTP; these read DHGKST and NKID.

The protein belongs to the TRAFAC class translation factor GTPase superfamily. Classic translation factor GTPase family. LepA subfamily.

The protein localises to the cell inner membrane. It catalyses the reaction GTP + H2O = GDP + phosphate + H(+). In terms of biological role, required for accurate and efficient protein synthesis under certain stress conditions. May act as a fidelity factor of the translation reaction, by catalyzing a one-codon backward translocation of tRNAs on improperly translocated ribosomes. Back-translocation proceeds from a post-translocation (POST) complex to a pre-translocation (PRE) complex, thus giving elongation factor G a second chance to translocate the tRNAs correctly. Binds to ribosomes in a GTP-dependent manner. This Gloeothece citriformis (strain PCC 7424) (Cyanothece sp. (strain PCC 7424)) protein is Elongation factor 4.